The following is a 244-amino-acid chain: Carbonyl reductase [NADPH] 2 (244 aa).

L11 to R39 is a binding site for NADP(+). S42 carries the post-translational modification Phosphoserine. Residue S136 participates in substrate binding. The active-site Proton acceptor is Y149. S176 carries the phosphoserine modification.

The protein belongs to the short-chain dehydrogenases/reductases (SDR) family. As to quaternary structure, homotetramer. Predominantly expressed in lung, in ciliated cells, non-ciliated bronchiolar cells and type-II alveolar pneumocytes. Also detected in adipose tissue (at protein level). Low expression in testis, heart, kidney, spleen, brain and liver.

The protein resides in the mitochondrion matrix. The catalysed reaction is a secondary alcohol + NADP(+) = a ketone + NADPH + H(+). Its function is as follows. May function in the pulmonary metabolism of endogenous carbonyl compounds, such as aliphatic aldehydes and ketones derived from lipid peroxidation, 3-ketosteroids and fatty aldehydes, as well as in xenobiotic metabolism. The protein is Carbonyl reductase [NADPH] 2 (Cbr2) of Mus musculus (Mouse).